A 152-amino-acid polypeptide reads, in one-letter code: Endoribonuclease YbeY (152 aa).

Residues His113, His117, and His123 each contribute to the Zn(2+) site.

This sequence belongs to the endoribonuclease YbeY family. It depends on Zn(2+) as a cofactor.

It is found in the cytoplasm. In terms of biological role, single strand-specific metallo-endoribonuclease involved in late-stage 70S ribosome quality control and in maturation of the 3' terminus of the 16S rRNA. The polypeptide is Endoribonuclease YbeY (Acidovorax sp. (strain JS42)).